The chain runs to 130 residues: MASPLENLENHLEMFIENVRQIRIIVSDFQPQGQNVLNQKIQSLVTGLQEIDKLKNQVDVNVPLEVFDYIDQGRNPQLYTKDCIDKALTKNEEVKGKIDSYRKFKSNLMKELDETFPTEIAKYKAIRGDE.

It belongs to the Mediator complex subunit 10 family. Component of the Mediator complex.

It is found in the nucleus. Component of the Mediator complex, a coactivator involved in the regulated transcription of nearly all RNA polymerase II-dependent genes. Mediator functions as a bridge to convey information from gene-specific regulatory proteins to the basal RNA polymerase II transcription machinery. Mediator is recruited to promoters by direct interactions with regulatory proteins and serves as a scaffold for the assembly of a functional preinitiation complex with RNA polymerase II and the general transcription factors. In Aedes aegypti (Yellowfever mosquito), this protein is Mediator of RNA polymerase II transcription subunit 10 (MED10).